The sequence spans 1028 residues: RNA cytidine acetyltransferase 2 (1028 aa).

ATP-binding positions include 286–295 and Arg458; that span reads GRGKSAALGL. One can recognise an N-acetyltransferase domain in the interval 546–729; that stretch reads VLLGPVDESQ…FAPFYVSQIP (184 aa). Acetyl-CoA contacts are provided by residues 617 to 619, 624 to 630, and Lys717; these read IAV and MKMGYGS. The segment at 982-1028 is disordered; it reads SGIISVKSTKSENENGFDKSTKKRSSDKRSSSSSKSKSSKKRKSLKE. Basic and acidic residues predominate over residues 990 to 1001; it reads TKSENENGFDKS. Residues 1018 to 1028 show a composition bias toward basic residues; that stretch reads KSSKKRKSLKE.

The protein belongs to the RNA cytidine acetyltransferase family. NAT10 subfamily.

Its subcellular location is the nucleus. The protein localises to the nucleolus. The catalysed reaction is a cytidine in 18S rRNA + acetyl-CoA + ATP + H2O = an N(4)-acetylcytidine in 18S rRNA + ADP + phosphate + CoA + H(+). It catalyses the reaction a cytidine in tRNA + acetyl-CoA + ATP + H2O = an N(4)-acetylcytidine in tRNA + ADP + phosphate + CoA + H(+). RNA cytidine acetyltransferase with specificity toward both 18S rRNA and tRNAs. Catalyzes the formation of N(4)-acetylcytidine (ac4C) in 18S rRNA. Required for early nucleolar cleavages of precursor rRNA at sites A0, A1 and A2 during 18S rRNA synthesis. Catalyzes the formation of ac4C in serine and leucine tRNAs. Requires a tRNA-binding adapter protein for full tRNA acetyltransferase activity but not for 18S rRNA acetylation. The protein is RNA cytidine acetyltransferase 2 of Arabidopsis thaliana (Mouse-ear cress).